The chain runs to 417 residues: MEQIKDIFKQVRQAKGSLAFCKEEIINDTLYALADRVEAATDRILEENAKDLAAMDPSNPKYDRLKLTAERIHAIAQGIRQVATLPSPSGRILSEAVRPNGMKLTKVSVPFGVIGIIYEARPNVTLDVFALCFKSGNACILKGGSDADFSNRILVEIIRNTLLDVAHLSPYLVALLPAGHDSADALLHARGYVDLIIPRGGKGLIDYVRQNATIPVIETGAGVCHVYFDKEGDVAKGAAIIRNAKTRRVSVCNALDCLIIDVNRLTDLSTLCSGLQQDNVEIYADDLCYNYLKTSYPSHLLKHASTDTFGTEFLDYKMAVTATMTIQAAVAHISIYGSGHSECIVTENDRAADYFMKMVDAACVYVNVPTSFTDGGEFGLGAEIGISTQKLHARGPMGLEELNTYKWIIQGDGQIRQ.

It belongs to the gamma-glutamyl phosphate reductase family.

The protein resides in the cytoplasm. The enzyme catalyses L-glutamate 5-semialdehyde + phosphate + NADP(+) = L-glutamyl 5-phosphate + NADPH + H(+). The protein operates within amino-acid biosynthesis; L-proline biosynthesis; L-glutamate 5-semialdehyde from L-glutamate: step 2/2. In terms of biological role, catalyzes the NADPH-dependent reduction of L-glutamate 5-phosphate into L-glutamate 5-semialdehyde and phosphate. The product spontaneously undergoes cyclization to form 1-pyrroline-5-carboxylate. This Phocaeicola vulgatus (strain ATCC 8482 / DSM 1447 / JCM 5826 / CCUG 4940 / NBRC 14291 / NCTC 11154) (Bacteroides vulgatus) protein is Gamma-glutamyl phosphate reductase.